Consider the following 199-residue polypeptide: Nuclear transcription factor Y subunit C-2 (199 aa).

Belongs to the NFYC/HAP5 subunit family. Heterotrimeric transcription factor composed of three components, NF-YA, NF-YB and NF-YC. NF-YB and NF-YC must interact and dimerize for NF-YA association and DNA binding. Interacts with HTT1 in both cytoplasm and nucleus. As to expression, ubiquitous.

It is found in the nucleus. The protein localises to the cytoplasm. In terms of biological role, stimulates the transcription of various genes by recognizing and binding to a CCAAT motif in promoters. The sequence is that of Nuclear transcription factor Y subunit C-2 (NFYC2) from Arabidopsis thaliana (Mouse-ear cress).